A 1442-amino-acid chain; its full sequence is DNA polymerase III PolC-type (1442 aa).

Residues 426-582 (YVVFDVETTG…YDTEATAYIF (157 aa)) form the Exonuclease domain.

It belongs to the DNA polymerase type-C family. PolC subfamily.

The protein resides in the cytoplasm. The catalysed reaction is DNA(n) + a 2'-deoxyribonucleoside 5'-triphosphate = DNA(n+1) + diphosphate. Functionally, required for replicative DNA synthesis. This DNA polymerase also exhibits 3' to 5' exonuclease activity. In Staphylococcus epidermidis (strain ATCC 12228 / FDA PCI 1200), this protein is DNA polymerase III PolC-type.